The sequence spans 430 residues: Histidine--tRNA ligase (430 aa).

Belongs to the class-II aminoacyl-tRNA synthetase family. In terms of assembly, homodimer.

The protein resides in the cytoplasm. It carries out the reaction tRNA(His) + L-histidine + ATP = L-histidyl-tRNA(His) + AMP + diphosphate + H(+). The protein is Histidine--tRNA ligase of Chlamydia felis (strain Fe/C-56) (Chlamydophila felis).